A 294-amino-acid polypeptide reads, in one-letter code: 4-diphosphocytidyl-2-C-methyl-D-erythritol kinase (294 aa).

Lysine 11 is a catalytic residue. Residue 96–106 (PVAAGIGGGSA) participates in ATP binding. Aspartate 138 is a catalytic residue.

The protein belongs to the GHMP kinase family. IspE subfamily.

The enzyme catalyses 4-CDP-2-C-methyl-D-erythritol + ATP = 4-CDP-2-C-methyl-D-erythritol 2-phosphate + ADP + H(+). It functions in the pathway isoprenoid biosynthesis; isopentenyl diphosphate biosynthesis via DXP pathway; isopentenyl diphosphate from 1-deoxy-D-xylulose 5-phosphate: step 3/6. Catalyzes the phosphorylation of the position 2 hydroxy group of 4-diphosphocytidyl-2C-methyl-D-erythritol. This is 4-diphosphocytidyl-2-C-methyl-D-erythritol kinase from Rhodopseudomonas palustris (strain BisB5).